The chain runs to 602 residues: Spermidine-citrate ligase (602 aa).

ATP-binding positions include 286-288 (SLR), lysine 300, and arginine 312.

Belongs to the IucA/IucC family.

The enzyme catalyses spermidine + citrate + ATP = N(8)-citryl-spermidine + AMP + diphosphate + H(+). The protein operates within siderophore biosynthesis; petrobactin biosynthesis. In terms of biological role, involved in the biosynthesis of petrobactin, a catecholate siderophore that functions in both iron acquisition and virulence. Catalyzes the ATP-dependent condensation of citric acid and spermidine to form N(8)-citryl-spermidine. It can also catalyze the condensation of several di- and triamine analogs of spermidine with citric acid and the condensation of the citric acid analog tricarballylic acid with spermidine. Required for growth in iron-depleted medium and for full virulence in a mouse model of infection. The protein is Spermidine-citrate ligase of Bacillus anthracis.